The sequence spans 709 residues: Phosphoribosylformylglycinamidine synthase subunit PurL (709 aa).

His36 is a catalytic residue. Positions 39 and 80 each coordinate ATP. Glu82 lines the Mg(2+) pocket. Substrate-binding positions include 83 to 86 and Arg105; that span reads SHNH. His84 (proton acceptor) is an active-site residue. Residue Asp106 participates in Mg(2+) binding. Gln226 serves as a coordination point for substrate. Mg(2+) is bound at residue Asp252. 294–296 contacts substrate; the sequence is ETQ. ATP is bound by residues Asp470 and Gly507. Position 510 (Ser510) interacts with substrate.

It belongs to the FGAMS family. In terms of assembly, monomer. Part of the FGAM synthase complex composed of 1 PurL, 1 PurQ and 2 PurS subunits.

The protein localises to the cytoplasm. The catalysed reaction is N(2)-formyl-N(1)-(5-phospho-beta-D-ribosyl)glycinamide + L-glutamine + ATP + H2O = 2-formamido-N(1)-(5-O-phospho-beta-D-ribosyl)acetamidine + L-glutamate + ADP + phosphate + H(+). Its pathway is purine metabolism; IMP biosynthesis via de novo pathway; 5-amino-1-(5-phospho-D-ribosyl)imidazole from N(2)-formyl-N(1)-(5-phospho-D-ribosyl)glycinamide: step 1/2. Functionally, part of the phosphoribosylformylglycinamidine synthase complex involved in the purines biosynthetic pathway. Catalyzes the ATP-dependent conversion of formylglycinamide ribonucleotide (FGAR) and glutamine to yield formylglycinamidine ribonucleotide (FGAM) and glutamate. The FGAM synthase complex is composed of three subunits. PurQ produces an ammonia molecule by converting glutamine to glutamate. PurL transfers the ammonia molecule to FGAR to form FGAM in an ATP-dependent manner. PurS interacts with PurQ and PurL and is thought to assist in the transfer of the ammonia molecule from PurQ to PurL. The sequence is that of Phosphoribosylformylglycinamidine synthase subunit PurL from Saccharolobus islandicus (strain M.16.4 / Kamchatka #3) (Sulfolobus islandicus).